Here is a 329-residue protein sequence, read N- to C-terminus: Bile salt hydrolase/transferase (329 aa).

C2 functions as the Nucleophile; acyl-thioester intermediate in the catalytic mechanism. Positions 2 and 18 each coordinate deoxycholate. N82 lines the taurine pocket.

Belongs to the peptidase C59 family. As to quaternary structure, homotetramer. The tetramer consists of a dimer of dimers.

The catalysed reaction is glycocholate + H2O = cholate + glycine. The enzyme catalyses cholate + taurine = taurocholate + H2O. It catalyses the reaction taurodeoxycholate + H2O = deoxycholate + taurine. It carries out the reaction glycodeoxycholate + H2O = deoxycholate + glycine. The catalysed reaction is chenodeoxycholate + glycine = glycochenodeoxycholate + H2O. The enzyme catalyses taurochenodeoxycholate + H2O = chenodeoxycholate + taurine. It catalyses the reaction an L-alpha-amino acid + cholate = an N-choloyl-L-alpha-amino acid + H2O. It carries out the reaction an L-alpha-amino acid + taurocholate = an N-choloyl-L-alpha-amino acid + taurine. The catalysed reaction is glycocholate + an L-alpha-amino acid = an N-choloyl-L-alpha-amino acid + glycine. The enzyme catalyses cholate + L-histidine = L-histidocholate + H2O. It catalyses the reaction taurocholate + L-histidine = L-histidocholate + taurine. It carries out the reaction glycocholate + L-histidine = L-histidocholate + glycine. The catalysed reaction is cholate + L-arginine = L-arginocholate + H2O. The enzyme catalyses taurocholate + L-arginine = L-arginocholate + taurine. It catalyses the reaction glycocholate + L-arginine = L-arginocholate + glycine. It carries out the reaction cholate + L-phenylalanine = L-phenylalanocholate + H2O. The catalysed reaction is taurocholate + L-phenylalanine = L-phenylalanocholate + taurine. It functions in the pathway lipid metabolism; bile acid biosynthesis. Functionally, possesses dual functions in bile acid metabolism. Acts as a bile salt hydrolase that catalyzes the deconjugation of glycine- and taurine-linked bile salts, which occurs naturally in the intestines of humans, releasing amino acid residues and deconjugated bile salts (bile acids). Can hydrolyze the amide bond in major human conjugated bile salts, such as glycocholate (GCA), taurocholate (TCA) and taurodeoxycholate (TDCA). Shows a slight preference for taurine-conjugated bile acids as substrates. Also acts as an amine N-acyltransferase that conjugates a wide variety of amino acids to conjugated and non-conjugated bile acids, thus producing bacterial bile acid amidates (BBAAs) - also named microbially conjugated bile acids (MCBAs) - in the gastrointestinal tract. These BBAAs may facilitate communication between the microbiota and host through the activation of human ligand-activated transcription factors. The polypeptide is Bile salt hydrolase/transferase (cbh) (Clostridium perfringens (strain 13 / Type A)).